The chain runs to 335 residues: Ubiquinone biosynthesis protein COQ4, mitochondrial (335 aa).

The N-terminal 10 residues, 1-10 (MLRLSLLRST), are a transit peptide targeting the mitochondrion. His-210, Asp-211, His-214, and Glu-226 together coordinate Zn(2+).

This sequence belongs to the COQ4 family. In terms of assembly, component of a multi-subunit COQ enzyme complex, composed of at least COQ3, COQ4, COQ5, COQ6, COQ7 and COQ9. Interacts with COQ3. Zn(2+) serves as cofactor.

Its subcellular location is the mitochondrion inner membrane. It catalyses the reaction 4-hydroxy-3-methoxy-5-(all-trans-hexaprenyl)benzoate + H(+) = 2-methoxy-6-(all-trans-hexaprenyl)phenol + CO2. The protein operates within cofactor biosynthesis; ubiquinone biosynthesis. In terms of biological role, lyase that catalyzes the C1-decarboxylation of 4-hydroxy-3-methoxy-5-(all-trans-hexaprenyl)benzoic acid into 2-methoxy-6-(all-trans-hexaprenyl)phenol during ubiquinone biosynthesis. The chain is Ubiquinone biosynthesis protein COQ4, mitochondrial from Saccharomyces cerevisiae (strain AWRI1631) (Baker's yeast).